A 481-amino-acid chain; its full sequence is Glutamyl-tRNA(Gln) amidotransferase subunit A (481 aa).

Catalysis depends on charge relay system residues K74 and S149. S173 acts as the Acyl-ester intermediate in catalysis.

This sequence belongs to the amidase family. GatA subfamily. As to quaternary structure, heterotrimer of A, B and C subunits.

It carries out the reaction L-glutamyl-tRNA(Gln) + L-glutamine + ATP + H2O = L-glutaminyl-tRNA(Gln) + L-glutamate + ADP + phosphate + H(+). Allows the formation of correctly charged Gln-tRNA(Gln) through the transamidation of misacylated Glu-tRNA(Gln) in organisms which lack glutaminyl-tRNA synthetase. The reaction takes place in the presence of glutamine and ATP through an activated gamma-phospho-Glu-tRNA(Gln). The polypeptide is Glutamyl-tRNA(Gln) amidotransferase subunit A (Francisella tularensis subsp. novicida (strain U112)).